The primary structure comprises 300 residues: uncharacterized protein (300 aa).

This is an uncharacterized protein from Bradyrhizobium diazoefficiens (strain JCM 10833 / BCRC 13528 / IAM 13628 / NBRC 14792 / USDA 110).